The sequence spans 164 residues: DNA-binding protein inhibitor ID-1 (164 aa).

Residues 46 to 98 enclose the bHLH domain; the sequence is LPALLDEQQVNVLLYDMNGCYSRLKELVPTLPQNRKVSKVEILQHVIDYIRDL. Positions 91-104 match the Nuclear export signal motif; it reads VIDYIRDLQLELNS.

As to quaternary structure, heterodimer with other HLH proteins. Interacts with COPS5, IFI204, GATA4, NKX2-5, CLOCK and BMAL1. Isoform Short can form homodimers. Post-translationally, phosphorylated in vitro by PKA and PKC.

The protein localises to the cytoplasm. The protein resides in the nucleus. Transcriptional regulator (lacking a basic DNA binding domain) which negatively regulates the basic helix-loop-helix (bHLH) transcription factors by forming heterodimers and inhibiting their DNA binding and transcriptional activity. Implicated in regulating a variety of cellular processes, including cellular growth, senescence, differentiation, apoptosis, angiogenesis, and neoplastic transformation. Inhibits skeletal muscle and cardiac myocyte differentiation. Regulates the circadian clock by repressing the transcriptional activator activity of the CLOCK-BMAL1 heterodimer. This is DNA-binding protein inhibitor ID-1 (Id1) from Rattus norvegicus (Rat).